We begin with the raw amino-acid sequence, 163 residues long: Phosphopantetheine adenylyltransferase (163 aa).

A substrate-binding site is contributed by T9. ATP is bound by residues 9 to 10 (TF) and H17. K41, T73, and R87 together coordinate substrate. Residues 88-90 (GLR), E98, and 123-129 (FSFISSS) contribute to the ATP site.

This sequence belongs to the bacterial CoaD family. In terms of assembly, homohexamer. Requires Mg(2+) as cofactor.

The protein resides in the cytoplasm. It catalyses the reaction (R)-4'-phosphopantetheine + ATP + H(+) = 3'-dephospho-CoA + diphosphate. The protein operates within cofactor biosynthesis; coenzyme A biosynthesis; CoA from (R)-pantothenate: step 4/5. In terms of biological role, reversibly transfers an adenylyl group from ATP to 4'-phosphopantetheine, yielding dephospho-CoA (dPCoA) and pyrophosphate. The protein is Phosphopantetheine adenylyltransferase of Desulfitobacterium hafniense (strain Y51).